Reading from the N-terminus, the 300-residue chain is Zinc finger CCCH-type antiviral protein 1-like (300 aa).

Position 2 is an N-acetylalanine (alanine 2). Over residues 252–263 the composition is skewed to polar residues; that stretch reads NTDNSSPSTEHS. The interval 252–300 is disordered; it reads NTDNSSPSTEHSQGLEKQGVHAAGAAEAGPLASVPAQSAKKPCPVSCEK. The segment covering 271–283 has biased composition (low complexity); that stretch reads VHAAGAAEAGPLA.

This is Zinc finger CCCH-type antiviral protein 1-like (ZC3HAV1L) from Homo sapiens (Human).